The sequence spans 377 residues: uncharacterized protein (377 aa).

A coiled-coil region spans residues 309-375 (NIISVDKIKE…ISNLNKKLKK (67 aa)).

The protein belongs to the mimivirus L5 family.

This is an uncharacterized protein from Acanthamoeba polyphaga (Amoeba).